A 256-amino-acid polypeptide reads, in one-letter code: N-acetylglucosaminyldiphosphoundecaprenol N-acetyl-beta-D-mannosaminyltransferase (256 aa).

Belongs to the glycosyltransferase 26 family. TagA/TarA subfamily.

The catalysed reaction is UDP-N-acetyl-alpha-D-mannosamine + N-acetyl-alpha-D-glucosaminyl-di-trans,octa-cis-undecaprenyl diphosphate = N-acetyl-beta-D-mannosaminyl-(1-&gt;4)-N-acetyl-alpha-D-glucosaminyl di-trans,octa-cis-undecaprenyl diphosphate + UDP + H(+). It participates in cell wall biogenesis; poly(glycerol phosphate) teichoic acid biosynthesis. In terms of biological role, catalyzes the conversion of GlcNAc-PP-undecaprenol into ManNAc-GlcNAc-PP-undecaprenol, the first committed lipid intermediate in the de novo synthesis of teichoic acid. In Bacillus subtilis (strain 168), this protein is N-acetylglucosaminyldiphosphoundecaprenol N-acetyl-beta-D-mannosaminyltransferase.